We begin with the raw amino-acid sequence, 207 residues long: Metalloproteinase inhibitor 1 (207 aa).

Residues Met1–Ala23 form the signal peptide. Cys24 serves as a coordination point for Zn(2+). The interval Cys24–Val27 is involved in metalloproteinase-binding. Cystine bridges form between Cys24/Cys93, Cys26/Cys122, Cys36/Cys147, Cys150/Cys197, Cys155/Cys160, and Cys168/Cys189. Residues Cys24–Cys147 enclose the NTR domain. An N-linked (GlcNAc...) asparagine glycan is attached at Asn53. Residues Glu90 to Ser91 are involved in metalloproteinase-binding. A glycan (N-linked (GlcNAc...) asparagine) is linked at Asn101. Ser178 bears the Phosphoserine mark.

It belongs to the protease inhibitor I35 (TIMP) family. Interacts with MMP1, MMP3, MMP10 and MMP13, but has only very low affinity for MMP14. Interacts with CD63; identified in a complex with CD63 and ITGB1. Post-translationally, the activity of TIMP1 is dependent on the presence of disulfide bonds. In terms of processing, N-glycosylated.

The protein localises to the secreted. Its function is as follows. Metalloproteinase inhibitor that functions by forming one to one complexes with target metalloproteinases, such as collagenases, and irreversibly inactivates them by binding to their catalytic zinc cofactor. Acts on MMP1, MMP2, MMP3, MMP7, MMP8, MMP9, MMP10, MMP11, MMP12, MMP13 and MMP16. Does not act on MMP14. Also functions as a growth factor that regulates cell differentiation, migration and cell death and activates cellular signaling cascades via CD63 and ITGB1. Plays a role in integrin signaling. The polypeptide is Metalloproteinase inhibitor 1 (TIMP1) (Oryctolagus cuniculus (Rabbit)).